The following is a 427-amino-acid chain: Hydroxylamine reductase (427 aa).

Positions 3, 6, 15, and 21 each coordinate [4Fe-4S] cluster. Hybrid [4Fe-2O-2S] cluster-binding residues include histidine 129, glutamate 153, cysteine 197, cysteine 283, cysteine 311, cysteine 336, glutamate 370, and lysine 372. Cysteine persulfide is present on cysteine 283.

It belongs to the HCP family. [4Fe-4S] cluster is required as a cofactor. It depends on hybrid [4Fe-2O-2S] cluster as a cofactor.

It localises to the cytoplasm. It carries out the reaction A + NH4(+) + H2O = hydroxylamine + AH2 + H(+). In terms of biological role, catalyzes the reduction of hydroxylamine to form NH(3) and H(2)O. The polypeptide is Hydroxylamine reductase (Moorella thermoacetica (strain ATCC 39073 / JCM 9320)).